Consider the following 363-residue polypeptide: Cyanuric acid amidohydrolase (363 aa).

The interval 1-103 (MKTRVTRLTV…LVFEVDDSAP (103 aa)) is RU A. Residues arginine 51 and 82-83 (SG) each bind substrate. Positions 111 to 247 (GLAAGVAFTR…NEVLVLGNAP (137 aa)) are RU B. Lysine 161 is an active-site residue. Residues arginine 193 and 230-231 (SA) each bind substrate. Serine 230 acts as the Nucleophile in catalysis. The tract at residues 253–363 (YRIGHAVMED…GGPLALIVRS (111 aa)) is RU C. Glutamate 297 provides a ligand contact to Mg(2+). Substrate is bound by residues arginine 324 and 343 to 344 (SG). Residues alanine 346, glutamine 349, glycine 350, proline 351, and glycine 354 each contribute to the Mg(2+) site.

The protein belongs to the cyclic amide hydrolase (CyAH) family. In terms of assembly, homotetramer.

It carries out the reaction cyanurate + H2O = 1-carboxybiuret + H(+). Its pathway is xenobiotic degradation; atrazine degradation; biuret from cyanurate: step 1/1. Inhibited by barbituric acid. Its function is as follows. Responsible for the hydrolysis of cyanuric acid, an intermediate formed during catabolism of s-triazine based compounds in herbicides such as atrazine and polymers such as melamine. Catalyzes the hydrolytic opening of the s-triazine ring of cyanuric acid (2,4,6-trihydroxy-s-triazine) to yield carbon dioxide and carboxybiuret, which spontaneously decarboxylates to biuret. The chain is Cyanuric acid amidohydrolase from Ectopseudomonas oleovorans (strain CECT 5344) (Pseudomonas pseudoalcaligenes).